Here is a 142-residue protein sequence, read N- to C-terminus: Large ribosomal subunit protein uL13 (142 aa).

This sequence belongs to the universal ribosomal protein uL13 family. In terms of assembly, part of the 50S ribosomal subunit.

Functionally, this protein is one of the early assembly proteins of the 50S ribosomal subunit, although it is not seen to bind rRNA by itself. It is important during the early stages of 50S assembly. The polypeptide is Large ribosomal subunit protein uL13 (Delftia acidovorans (strain DSM 14801 / SPH-1)).